The primary structure comprises 336 residues: Protein YIPF3 (336 aa).

The segment at 1-73 (MSAPGGGRSG…AGAGGEEDGE (73 aa)) is disordered. Residues 1-143 (MSAPGGGRSG…PVKMINFPQK (143 aa)) lie on the Cytoplasmic side of the membrane. The segment covering 55 to 73 (EEEEEAEGEAGAGGEEDGE) has biased composition (acidic residues). A helical transmembrane segment spans residues 144–164 (IAGELYGPLMLVFTLVAILLH). Over 165-182 (GMKTSDTIIREGTLMGTA) the chain is Lumenal. Residues 183 to 203 (IGTCFGYWLGVSSFIYFLAYL) traverse the membrane as a helical segment. The Cytoplasmic segment spans residues 204–209 (CNAQIT). Residues 210 to 230 (MVQMLSLLGYGLFGHCITLLV) form a helical membrane-spanning segment. Residues 231-239 (TYNIHFHSL) are Lumenal-facing. The helical transmembrane segment at 240–260 (FYIFWLVVGGLSTLRMVAVLV) threads the bilayer. Residues 261 to 269 (SRTVGHTQR) lie on the Cytoplasmic side of the membrane. A helical membrane pass occupies residues 270 to 290 (LILCGTLAALHMLFLLYLHFA). At 291–336 (YHKVVEGILDTLEGPNMPPFQRVARDIPVVSNAVLNTTAKANAMTL) the chain is on the lumenal side. N-linked (GlcNAc...) asparagine glycosylation is present at N326.

This sequence belongs to the YIP1 family.

The protein localises to the cell membrane. It localises to the golgi apparatus. It is found in the cis-Golgi network membrane. Its subcellular location is the cytoplasm. Functionally, involved in the maintenance of the Golgi structure. May play a role in hematopoiesis. The protein is Protein YIPF3 (YIPF3) of Gallus gallus (Chicken).